The primary structure comprises 178 residues: Large ribosomal subunit protein uL6 (178 aa).

It belongs to the universal ribosomal protein uL6 family. As to quaternary structure, part of the 50S ribosomal subunit.

Functionally, this protein binds to the 23S rRNA, and is important in its secondary structure. It is located near the subunit interface in the base of the L7/L12 stalk, and near the tRNA binding site of the peptidyltransferase center. The chain is Large ribosomal subunit protein uL6 from Frankia alni (strain DSM 45986 / CECT 9034 / ACN14a).